We begin with the raw amino-acid sequence, 251 residues long: Aliphatic sulfonates import ATP-binding protein SsuB (251 aa).

The region spanning 19 to 238 is the ABC transporter domain; the sequence is GELRHVDKWY…PGEPGAHTER (220 aa). 51 to 58 is a binding site for ATP; it reads GRSGSGKS.

It belongs to the ABC transporter superfamily. Aliphatic sulfonates importer (TC 3.A.1.17.2) family. In terms of assembly, the complex is composed of two ATP-binding proteins (SsuB), two transmembrane proteins (SsuC) and a solute-binding protein (SsuA).

The protein resides in the cell membrane. It carries out the reaction ATP + H2O + aliphatic sulfonate-[sulfonate-binding protein]Side 1 = ADP + phosphate + aliphatic sulfonateSide 2 + [sulfonate-binding protein]Side 1.. In terms of biological role, part of the ABC transporter complex SsuABC involved in aliphatic sulfonates import. Responsible for energy coupling to the transport system. In Mycobacterium avium (strain 104), this protein is Aliphatic sulfonates import ATP-binding protein SsuB.